Consider the following 116-residue polypeptide: Large ribosomal subunit protein bL17 (116 aa).

This sequence belongs to the bacterial ribosomal protein bL17 family. As to quaternary structure, part of the 50S ribosomal subunit. Contacts protein L32.

This Aliarcobacter butzleri (strain RM4018) (Arcobacter butzleri) protein is Large ribosomal subunit protein bL17.